The following is a 392-amino-acid chain: Acetyl-CoA acetyltransferase (392 aa).

Cys-85 acts as the Acyl-thioester intermediate in catalysis. Positions 206, 207, 209, and 332 each coordinate CoA. His-336 acts as the Proton acceptor in catalysis.

The protein belongs to the thiolase-like superfamily. Thiolase family. Interacts with HMG-CoA synthase (HMGCS) that catalyzes the second step in the pathway and with a DUF35 protein. The acetoacetyl-CoA thiolase/HMG-CoA synthase complex channels the intermediate via a fused CoA-binding site, which allows for efficient coupling of the endergonic thiolase reaction with the exergonic HMGCS reaction.

The catalysed reaction is 2 acetyl-CoA = acetoacetyl-CoA + CoA. It participates in metabolic intermediate biosynthesis; (R)-mevalonate biosynthesis; (R)-mevalonate from acetyl-CoA: step 1/3. Catalyzes the condensation of two acetyl-coA molecules into acetoacetyl-CoA. Functions in the mevalonate (MVA) pathway leading to isopentenyl diphosphate (IPP), a key precursor for the biosynthesis of isoprenoid compounds that are building blocks of archaeal membrane lipids. This is Acetyl-CoA acetyltransferase from Methanocaldococcus jannaschii (strain ATCC 43067 / DSM 2661 / JAL-1 / JCM 10045 / NBRC 100440) (Methanococcus jannaschii).